The sequence spans 122 residues: Large ribosomal subunit protein uL18 (122 aa).

Residues 1-16 (MFKKVDRKASRQKKQM) are compositionally biased toward basic residues. Positions 1-29 (MFKKVDRKASRQKKQMSIRNKISGTPERP) are disordered.

The protein belongs to the universal ribosomal protein uL18 family. In terms of assembly, part of the 50S ribosomal subunit; part of the 5S rRNA/L5/L18/L25 subcomplex. Contacts the 5S and 23S rRNAs.

Its function is as follows. This is one of the proteins that bind and probably mediate the attachment of the 5S RNA into the large ribosomal subunit, where it forms part of the central protuberance. The polypeptide is Large ribosomal subunit protein uL18 (Fusobacterium nucleatum subsp. nucleatum (strain ATCC 25586 / DSM 15643 / BCRC 10681 / CIP 101130 / JCM 8532 / KCTC 2640 / LMG 13131 / VPI 4355)).